Consider the following 750-residue polypeptide: MIIRSPEPEVKILVDRDPVKTSFEEWARPGHFSRTIAKGPDTTTWIWNLHADAHDFDSHTSDLEEISRKVFSAHFGQLSIIFLWLSGMYFHGARFSNYEAWLSDPTHIGPSAQVVWPIVGQEILNGDVGGGFRGIQITSGFFQLWRASGITSELQLYCTAIGALVFAALMLFAGWFHYHKAAPKLAWFQDVESMLNHHLAGLLGLGSLSWAGHQVHVSLPINQFLNAGVDPKEIPLPHEFILNRDLLAQLYPSFAEGATPFFTLNWSKYADFLTFRGGLDPVTGGLWLTDIAHHHLAIAILFLIAGHMYRTNWGIGHGLKDILEAHKGPFTGQGHKGLYEILTTSWHAQLSLNLAMLGSLTIVVAHHMYSMPPYPYLATDYGTQLSLFTHHMWIGGFLIVGAAAHAAIFMVRDYDPTTRYNDLLDRVLRHRDAIISHLNWACIFLGFHSFGLYIHNDTMSALGRPQDMFSDTAIQLQPVFAQWIQNTHALAPGATAPGATASTSLTWGGGDLVAVGGKVALLPIPLGTADFLVHHIHAFTIHVTVLILLKGVLFARSSRLIPDKANLGFRFPCDGPGRGGTCQVSAWDHVFLGLFWMYNSISVVIFHFSWKMQSDVWGSVSDQGVVTHITGGNFAQSSITINGWLRDFLWAQASQVIQSYGSSLSAYGLFFLGAHFVWAFSLMFLFSGRGYWQELIESIVWAHNKLKVAPATQPRALSIIQGRAVGVTHYLLGGIATTWAFFLARIIAVG.

A run of 8 helical transmembrane segments spans residues 70–93 (VFSA…FHGA), 156–179 (LYCT…FHYH), 195–219 (LNHH…HVSL), 291–309 (IAHH…GHMY), 346–369 (WHAQ…HHMY), 385–411 (LSLF…IFMV), 433–455 (AIIS…LYIH), and 531–549 (FLVH…LILL). [4Fe-4S] cluster-binding residues include Cys-573 and Cys-582. Helical transmembrane passes span 589 to 610 (HVFL…HFSW) and 664 to 686 (LSAY…MFLF). His-675 contacts chlorophyll a'. Chlorophyll a is bound by residues Met-683 and Tyr-691. Trp-692 is a binding site for phylloquinone. The chain crosses the membrane as a helical span at residues 724–744 (AVGVTHYLLGGIATTWAFFLA).

It belongs to the PsaA/PsaB family. The PsaA/B heterodimer binds the P700 chlorophyll special pair and subsequent electron acceptors. PSI consists of a core antenna complex that captures photons, and an electron transfer chain that converts photonic excitation into a charge separation. The eukaryotic PSI reaction center is composed of at least 11 subunits. It depends on P700 is a chlorophyll a/chlorophyll a' dimer, A0 is one or more chlorophyll a, A1 is one or both phylloquinones and FX is a shared 4Fe-4S iron-sulfur center. as a cofactor.

The protein localises to the plastid. The protein resides in the chloroplast thylakoid membrane. The enzyme catalyses reduced [plastocyanin] + hnu + oxidized [2Fe-2S]-[ferredoxin] = oxidized [plastocyanin] + reduced [2Fe-2S]-[ferredoxin]. In terms of biological role, psaA and PsaB bind P700, the primary electron donor of photosystem I (PSI), as well as the electron acceptors A0, A1 and FX. PSI is a plastocyanin-ferredoxin oxidoreductase, converting photonic excitation into a charge separation, which transfers an electron from the donor P700 chlorophyll pair to the spectroscopically characterized acceptors A0, A1, FX, FA and FB in turn. Oxidized P700 is reduced on the lumenal side of the thylakoid membrane by plastocyanin. In Solanum bulbocastanum (Wild potato), this protein is Photosystem I P700 chlorophyll a apoprotein A1.